The primary structure comprises 472 residues: UDP-N-acetylmuramate--L-alanine ligase (472 aa).

Residue 122 to 128 participates in ATP binding; the sequence is GSHGKTT.

The protein belongs to the MurCDEF family.

It is found in the cytoplasm. The catalysed reaction is UDP-N-acetyl-alpha-D-muramate + L-alanine + ATP = UDP-N-acetyl-alpha-D-muramoyl-L-alanine + ADP + phosphate + H(+). It participates in cell wall biogenesis; peptidoglycan biosynthesis. Functionally, cell wall formation. The protein is UDP-N-acetylmuramate--L-alanine ligase of Prochlorococcus marinus (strain SARG / CCMP1375 / SS120).